We begin with the raw amino-acid sequence, 251 residues long: DNA repair protein RecO (251 aa).

Belongs to the RecO family.

In terms of biological role, involved in DNA repair and RecF pathway recombination. The polypeptide is DNA repair protein RecO (Macrococcus caseolyticus (strain JCSC5402) (Macrococcoides caseolyticum)).